The sequence spans 701 residues: Methionine--tRNA ligase (701 aa).

Residues 13–23 (PYANGSIHLGH) carry the 'HIGH' region motif. Positions 144, 147, 157, and 160 each coordinate Zn(2+). Residues 336–340 (KMSKS) carry the 'KMSKS' region motif. Residue Lys-339 coordinates ATP. A tRNA-binding domain is found at 600–701 (DFSKIDLRIA…SGAQPGMRVK (102 aa)).

Belongs to the class-I aminoacyl-tRNA synthetase family. MetG type 1 subfamily. In terms of assembly, homodimer. It depends on Zn(2+) as a cofactor.

The protein localises to the cytoplasm. The enzyme catalyses tRNA(Met) + L-methionine + ATP = L-methionyl-tRNA(Met) + AMP + diphosphate. Functionally, is required not only for elongation of protein synthesis but also for the initiation of all mRNA translation through initiator tRNA(fMet) aminoacylation. The sequence is that of Methionine--tRNA ligase from Nitrosomonas eutropha (strain DSM 101675 / C91 / Nm57).